Here is a 489-residue protein sequence, read N- to C-terminus: MTFRHCVAVDLGASSGRVMLARYDSKHRTLTLREIHRFVNCLQKTDGFDTWDIDSLEKDIRLGLKKVCNEGILIDSIGIDTWGVDYVLLDKQGQRVGLPVSYRDNRTTGIMPQALVQIGKSEIYRRSGIQFLPFNTIYQLRALTKQQPELTAQVAHALLMPDYFSYRLTGEMNWEYTNATTTQLVNINTDDWDDTLLAWTGAKKSWFGRPSHPGNVIGDWICPQGNRIPVVAVASHDTASAVIASPLANKHSAYLSSGTWSLMGFESKKPYTTDEALAANITNEGGAEGRYRVLKNIMGLWLLQRVLKERRITDLPVLIAQTEALPACRFLINPNDDRFINPDDMRAEIQAACRETDQPVPVSDAELARCIFDSLALLYADILHELANLRGEKFTQLHIVGGGCQNALLNQLCANACGIRVMAGPVEASTLGNIGIQLMTLDELNNVDDFRQVVSANYDLTTYIPNPDSEIARHVAQFQPKRQTKELCA.

13-17 (ASSGR) is a binding site for ATP. Cys-68 and Cys-222 are joined by a disulfide. Substrate-binding positions include Gly-83 and 236 to 238 (HDT). The active-site Proton acceptor is Asp-237. Residue Thr-259 participates in ATP binding. Asn-296 contributes to the substrate binding site. Gln-304 contacts ATP. An intrachain disulfide couples Cys-353 to Cys-370. Gly-402 provides a ligand contact to ATP. Residues Cys-413 and Cys-417 are joined by a disulfide bond.

The protein belongs to the rhamnulokinase family. It depends on Mg(2+) as a cofactor.

It carries out the reaction L-rhamnulose + ATP = L-rhamnulose 1-phosphate + ADP + H(+). The protein operates within carbohydrate degradation; L-rhamnose degradation; glycerone phosphate from L-rhamnose: step 2/3. Functionally, involved in the catabolism of L-rhamnose (6-deoxy-L-mannose). Catalyzes the transfer of the gamma-phosphate group from ATP to the 1-hydroxyl group of L-rhamnulose to yield L-rhamnulose 1-phosphate. This Salmonella typhi protein is Rhamnulokinase.